Consider the following 326-residue polypeptide: tRNA-modifying protein YgfZ (326 aa).

Folate is bound by residues W27 and W189.

This sequence belongs to the tRNA-modifying YgfZ family.

Its subcellular location is the cytoplasm. Functionally, folate-binding protein involved in regulating the level of ATP-DnaA and in the modification of some tRNAs. It is probably a key factor in regulatory networks that act via tRNA modification, such as initiation of chromosomal replication. This is tRNA-modifying protein YgfZ from Escherichia coli O7:K1 (strain IAI39 / ExPEC).